A 336-amino-acid chain; its full sequence is Sex determination protein tasselseed-2 (336 aa).

59–83 (IVTGGARGIGEAIVRLFAKHGARVV) contributes to the NAD(+) binding site. Serine 194 is a binding site for substrate. The Proton acceptor role is filled by tyrosine 207.

This sequence belongs to the short-chain dehydrogenases/reductases (SDR) family.

Functionally, required for stage-specific floral organ abortion. The protein is Sex determination protein tasselseed-2 (TS2) of Zea mays (Maize).